We begin with the raw amino-acid sequence, 522 residues long: ATP synthase subunit alpha 2 (522 aa).

An ATP-binding site is contributed by 176–183; sequence GDRQTGKT.

The protein belongs to the ATPase alpha/beta chains family. F-type ATPases have 2 components, CF(1) - the catalytic core - and CF(0) - the membrane proton channel. CF(1) has five subunits: alpha(3), beta(3), gamma(1), delta(1), epsilon(1). CF(0) has three main subunits: a(1), b(2) and c(9-12). The alpha and beta chains form an alternating ring which encloses part of the gamma chain. CF(1) is attached to CF(0) by a central stalk formed by the gamma and epsilon chains, while a peripheral stalk is formed by the delta and b chains.

The protein resides in the cell inner membrane. It carries out the reaction ATP + H2O + 4 H(+)(in) = ADP + phosphate + 5 H(+)(out). Produces ATP from ADP in the presence of a proton gradient across the membrane. The alpha chain is a regulatory subunit. The polypeptide is ATP synthase subunit alpha 2 (Syntrophotalea carbinolica (strain DSM 2380 / NBRC 103641 / GraBd1) (Pelobacter carbinolicus)).